The sequence spans 146 residues: Small ribosomal subunit protein uS15 (146 aa).

It belongs to the universal ribosomal protein uS15 family. In terms of assembly, part of the 30S ribosomal subunit.

The chain is Small ribosomal subunit protein uS15 from Picrophilus torridus (strain ATCC 700027 / DSM 9790 / JCM 10055 / NBRC 100828 / KAW 2/3).